The chain runs to 97 residues: Protein YukE (97 aa).

Positions V21–Q94 form a coiled coil.

This sequence belongs to the WXG100 family. sagEsxA-like subfamily. Homodimer.

It localises to the secreted. In terms of biological role, required to deliver LXG toxins to target cells. The sequence is that of Protein YukE (yukE) from Bacillus subtilis (strain 168).